We begin with the raw amino-acid sequence, 188 residues long: dCTP deaminase (188 aa).

DCTP is bound by residues 111 to 116 (KSTYAR), 135 to 137 (TLE), Gln156, Tyr170, and Gln180. The active-site Proton donor/acceptor is the Glu137.

This sequence belongs to the dCTP deaminase family. Homotrimer.

It carries out the reaction dCTP + H2O + H(+) = dUTP + NH4(+). The protein operates within pyrimidine metabolism; dUMP biosynthesis; dUMP from dCTP (dUTP route): step 1/2. Catalyzes the deamination of dCTP to dUTP. The polypeptide is dCTP deaminase (Cupriavidus pinatubonensis (strain JMP 134 / LMG 1197) (Cupriavidus necator (strain JMP 134))).